A 502-amino-acid chain; its full sequence is Glycerol kinase (502 aa).

Residue T13 participates in ADP binding. Residues T13, T14, and S15 each coordinate ATP. T13 contributes to the sn-glycerol 3-phosphate binding site. R17 contributes to the ADP binding site. The sn-glycerol 3-phosphate site is built by R83, E84, Y136, and D246. 5 residues coordinate glycerol: R83, E84, Y136, D246, and Q247. ADP-binding residues include T268 and G311. The ATP site is built by T268, G311, Q315, and G412. ADP contacts are provided by G412 and N416.

It belongs to the FGGY kinase family.

It catalyses the reaction glycerol + ATP = sn-glycerol 3-phosphate + ADP + H(+). The protein operates within polyol metabolism; glycerol degradation via glycerol kinase pathway; sn-glycerol 3-phosphate from glycerol: step 1/1. Its activity is regulated as follows. Inhibited by fructose 1,6-bisphosphate (FBP). Key enzyme in the regulation of glycerol uptake and metabolism. Catalyzes the phosphorylation of glycerol to yield sn-glycerol 3-phosphate. This chain is Glycerol kinase, found in Francisella tularensis subsp. tularensis (strain FSC 198).